A 171-amino-acid chain; its full sequence is Sec-independent protein translocase protein TatB (171 aa).

Residues 1 to 21 (MFDIGFSELLLVFIIGLVVLG) form a helical membrane-spanning segment. Positions 117 to 171 (KDNEAAHEGVTPAAAQTQASSPEQKPETTPEPVVKPAADAEPKTAAPSPSSSDKP) are disordered. Polar residues predominate over residues 130–139 (AAQTQASSPE).

It belongs to the TatB family. In terms of assembly, the Tat system comprises two distinct complexes: a TatABC complex, containing multiple copies of TatA, TatB and TatC subunits, and a separate TatA complex, containing only TatA subunits. Substrates initially bind to the TatABC complex, which probably triggers association of the separate TatA complex to form the active translocon.

It localises to the cell inner membrane. Its function is as follows. Part of the twin-arginine translocation (Tat) system that transports large folded proteins containing a characteristic twin-arginine motif in their signal peptide across membranes. Together with TatC, TatB is part of a receptor directly interacting with Tat signal peptides. TatB may form an oligomeric binding site that transiently accommodates folded Tat precursor proteins before their translocation. The sequence is that of Sec-independent protein translocase protein TatB from Escherichia coli O157:H7.